Reading from the N-terminus, the 562-residue chain is Oxygen-dependent choline dehydrogenase (562 aa).

4–33 (DYIIIGAGSAGNVLATRLTEDPNTSVLLLE) provides a ligand contact to FAD. H473 serves as the catalytic Proton acceptor.

Belongs to the GMC oxidoreductase family. Requires FAD as cofactor.

Its subcellular location is the cell membrane. The enzyme catalyses choline + A = betaine aldehyde + AH2. It carries out the reaction betaine aldehyde + NAD(+) + H2O = glycine betaine + NADH + 2 H(+). Its pathway is amine and polyamine biosynthesis; betaine biosynthesis via choline pathway; betaine aldehyde from choline (cytochrome c reductase route): step 1/1. Functionally, involved in the biosynthesis of the osmoprotectant glycine betaine. Catalyzes the oxidation of choline to betaine aldehyde and betaine aldehyde to glycine betaine at the same rate. This chain is Oxygen-dependent choline dehydrogenase, found in Escherichia coli O157:H7.